Consider the following 122-residue polypeptide: Ribonuclease pancreatic (122 aa).

A compositionally biased stretch (basic and acidic residues) spans 1 to 16 (ETPAEKFQRQHMDTEH). Residues 1–20 (ETPAEKFQRQHMDTEHSTAS) are disordered. Lys-6 and Arg-9 together coordinate substrate. His-11 acts as the Proton acceptor in catalysis. 4 disulfides stabilise this stretch: Cys-25-Cys-83, Cys-39-Cys-94, Cys-57-Cys-109, and Cys-64-Cys-71. Substrate-binding positions include 40-44 (KPLNT), Lys-65, and Arg-84. Catalysis depends on His-117, which acts as the Proton donor.

The protein belongs to the pancreatic ribonuclease family. As to quaternary structure, monomer. Interacts with and forms tight 1:1 complexes with RNH1. Dimerization of two such complexes may occur. Interaction with RNH1 inhibits this protein. In terms of processing, not glycosylated although the sequence N-V-T, a recognition site for carbohydrate attachment, is present. As to expression, pancreas.

It localises to the secreted. It carries out the reaction an [RNA] containing cytidine + H2O = an [RNA]-3'-cytidine-3'-phosphate + a 5'-hydroxy-ribonucleotide-3'-[RNA].. It catalyses the reaction an [RNA] containing uridine + H2O = an [RNA]-3'-uridine-3'-phosphate + a 5'-hydroxy-ribonucleotide-3'-[RNA].. Its function is as follows. Endonuclease that catalyzes the cleavage of RNA on the 3' side of pyrimidine nucleotides. Acts on single-stranded and double-stranded RNA. The polypeptide is Ribonuclease pancreatic (RNASE1) (Osphranter rufus (Red kangaroo)).